The chain runs to 178 residues: Caveolin-1 (178 aa).

The residue at position 2 (serine 2) is an N-acetylserine. Residue serine 2 is modified to Phosphoserine. Positions 2–94 (SGGKYVDSEG…WKASFTTFTV (93 aa)) are required for homooligomerization. The Cytoplasmic segment spans residues 2 to 104 (SGGKYVDSEG…TKYWFYRLLS (103 aa)). Residue lysine 5 is modified to N6-acetyllysine; alternate. Lysine 5 is covalently cross-linked (Glycyl lysine isopeptide (Lys-Gly) (interchain with G-Cter in ubiquitin); alternate). Position 6 is a phosphotyrosine (tyrosine 6). The residue at position 9 (serine 9) is a Phosphoserine. Phosphotyrosine; by ABL1 is present on tyrosine 14. The residue at position 25 (tyrosine 25) is a Phosphotyrosine. Residues lysine 26, lysine 30, lysine 39, lysine 47, and lysine 57 each participate in a glycyl lysine isopeptide (Lys-Gly) (interchain with G-Cter in ubiquitin) cross-link. The interval 82–94 (DGIWKASFTTFTV) is interaction with CAVIN3. Positions 105-125 (ALFGIPMALIWGIYFAILSFL) form an intramembrane region, helical. The Cytoplasmic portion of the chain corresponds to 126-178 (HIWAVVPCIKSFLIEIQCISRVYSIYVHTFCDPLFEAIGKIFSNIRINMQKEI). Residues 131–142 (VPCIKSFLIEIQ) form an interacts with SPRY1, SPRY2, SPRY3 and SPRY4 region. 3 S-palmitoyl cysteine lipidation sites follow: cysteine 133, cysteine 143, and cysteine 156. An interacts with SPRY1, SPRY2, and SPRY4 region spans residues 149 to 160 (SIYVHTFCDPLF). The segment at 167–178 (FSNIRINMQKEI) is interacts with SPRY1, SPRY2, SPRY3 and SPRY4.

The protein belongs to the caveolin family. Homooligomer. Interacts with GLIPR2. Interacts with NOSTRIN. Interacts with SNAP25 and STX1A. Interacts (via the N-terminus) with DPP4; the interaction is direct. Interacts with CTNNB1, CDH1 and JUP. Interacts with PACSIN2; this interaction induces membrane tubulation. Interacts with SLC7A9. Interacts with BMX and BTK. Interacts with TGFBR1. Interacts with CAVIN3 (via leucine-zipper domain) in a cholesterol-sensitive manner. Interacts with CAVIN1. Interacts with EHD2 in a cholesterol-dependent manner. Forms a ternary complex with UBXN6 and VCP; mediates CAV1 targeting to lysosomes for degradation. Interacts with ABCG1; this interaction regulates ABCG1-mediated cholesterol efflux. Interacts with NEU3; this interaction enhances NEU3 sialidase activity within caveola. Interacts (via C-terminus) with SPRY1, SPRY2 (via C-terminus), SPRY3, and SPRY4. Interacts with IGFBP5; this interaction allows trafficking of IGFBP5 from the plasma membrane to the nucleus. Post-translationally, phosphorylated at Tyr-14 by ABL1 in response to oxidative stress. In terms of processing, ubiquitinated. Undergo monoubiquitination and multi- and/or polyubiquitination. Monoubiquitination of N-terminal lysines promotes integration in a ternary complex with UBXN6 and VCP which promotes oligomeric CAV1 targeting to lysosomes for degradation. Ubiquitinated by ZNRF1; leading to degradation and modulation of the TLR4-mediated immune response.

The protein localises to the golgi apparatus membrane. It localises to the cell membrane. Its subcellular location is the membrane. The protein resides in the caveola. It is found in the membrane raft. Functionally, may act as a scaffolding protein within caveolar membranes. Forms a stable heterooligomeric complex with CAV2 that targets to lipid rafts and drives caveolae formation. Mediates the recruitment of CAVIN proteins (CAVIN1/2/3/4) to the caveolae. Interacts directly with G-protein alpha subunits and can functionally regulate their activity. Involved in the costimulatory signal essential for T-cell receptor (TCR)-mediated T-cell activation. Its binding to DPP4 induces T-cell proliferation and NF-kappa-B activation in a T-cell receptor/CD3-dependent manner. Recruits CTNNB1 to caveolar membranes and may regulate CTNNB1-mediated signaling through the Wnt pathway. Negatively regulates TGFB1-mediated activation of SMAD2/3 by mediating the internalization of TGFBR1 from membrane rafts leading to its subsequent degradation. Binds 20(S)-hydroxycholesterol (20(S)-OHC). The chain is Caveolin-1 (CAV1) from Muntiacus muntjak (Barking deer).